We begin with the raw amino-acid sequence, 146 residues long: Hut operon positive regulatory protein (146 aa).

Belongs to the HutP family. In terms of assembly, homohexamer.

Functionally, antiterminator that binds to cis-acting regulatory sequences on the mRNA in the presence of histidine, thereby suppressing transcription termination and activating the hut operon for histidine utilization. In Bacillus cytotoxicus (strain DSM 22905 / CIP 110041 / 391-98 / NVH 391-98), this protein is Hut operon positive regulatory protein.